A 425-amino-acid chain; its full sequence is Trigger factor (425 aa).

In terms of domain architecture, PPIase FKBP-type spans 158–231 (GDLVRISMEV…VQEVYRRTLP (74 aa)).

This sequence belongs to the FKBP-type PPIase family. Tig subfamily.

The protein localises to the cytoplasm. It carries out the reaction [protein]-peptidylproline (omega=180) = [protein]-peptidylproline (omega=0). Its function is as follows. Involved in protein export. Acts as a chaperone by maintaining the newly synthesized protein in an open conformation. Functions as a peptidyl-prolyl cis-trans isomerase. This chain is Trigger factor, found in Thermotoga neapolitana (strain ATCC 49049 / DSM 4359 / NBRC 107923 / NS-E).